A 718-amino-acid chain; its full sequence is Polyribonucleotide nucleotidyltransferase (718 aa).

Mg(2+) is bound by residues D487 and D493. Positions 554 to 613 constitute a KH domain; sequence PRIETFKIPTDKIREVIGTGGKVIREIVEKTGAKVNIEDDGTVKVASSDGESIKAAIKWI. An S1 motif domain is found at 623–691; sequence GEIYEGTVVK…DRGKTRLSMR (69 aa). The disordered stretch occupies residues 694–718; sequence DQETGEDLEAKQKAEGEAPAQATGE.

It belongs to the polyribonucleotide nucleotidyltransferase family. Mg(2+) serves as cofactor.

The protein localises to the cytoplasm. The catalysed reaction is RNA(n+1) + phosphate = RNA(n) + a ribonucleoside 5'-diphosphate. Involved in mRNA degradation. Catalyzes the phosphorolysis of single-stranded polyribonucleotides processively in the 3'- to 5'-direction. The polypeptide is Polyribonucleotide nucleotidyltransferase (Rhodopseudomonas palustris (strain HaA2)).